The primary structure comprises 106 residues: Putative double-stranded DNA mimic protein VV1_3059 (106 aa).

The protein belongs to the putative dsDNA mimic protein family.

May act as a double-stranded DNA (dsDNA) mimic. Probably regulates the activity of a dsDNA-binding protein. The polypeptide is Putative double-stranded DNA mimic protein VV1_3059 (Vibrio vulnificus (strain CMCP6)).